Here is a 94-residue protein sequence, read N- to C-terminus: ESAT-6-like protein EsxI (94 aa).

This sequence belongs to the WXG100 family. ESAT-6 subfamily.

It localises to the secreted. This Mycobacterium bovis (strain ATCC BAA-935 / AF2122/97) protein is ESAT-6-like protein EsxI.